The chain runs to 413 residues: Arginine biosynthesis bifunctional protein ArgJ, mitochondrial (413 aa).

Residues Thr-168, Lys-194, Thr-205, and Glu-292 each coordinate substrate. Thr-205 acts as the Nucleophile in catalysis.

It belongs to the ArgJ family. Heterodimer of an alpha and a beta chain. Post-translationally, the alpha and beta chains are autoproteolytically processed from a single precursor protein within the mitochondrion.

The protein localises to the mitochondrion matrix. The catalysed reaction is N(2)-acetyl-L-ornithine + L-glutamate = N-acetyl-L-glutamate + L-ornithine. It catalyses the reaction L-glutamate + acetyl-CoA = N-acetyl-L-glutamate + CoA + H(+). The protein operates within amino-acid biosynthesis; L-arginine biosynthesis; L-ornithine and N-acetyl-L-glutamate from L-glutamate and N(2)-acetyl-L-ornithine (cyclic): step 1/1. It functions in the pathway amino-acid biosynthesis; L-arginine biosynthesis; N(2)-acetyl-L-ornithine from L-glutamate: step 1/4. Its function is as follows. Catalyzes two activities which are involved in the cyclic version of arginine biosynthesis: the synthesis of acetylglutamate from glutamate and acetyl-CoA, and of ornithine by transacetylation between acetylornithine and glutamate. The protein is Arginine biosynthesis bifunctional protein ArgJ, mitochondrial of Clavispora lusitaniae (strain ATCC 42720) (Yeast).